A 171-amino-acid polypeptide reads, in one-letter code: 3-hydroxydecanoyl-[acyl-carrier-protein] dehydratase (171 aa).

His-70 is a catalytic residue.

The protein belongs to the thioester dehydratase family. FabA subfamily. In terms of assembly, homodimer.

It localises to the cytoplasm. The enzyme catalyses a (3R)-hydroxyacyl-[ACP] = a (2E)-enoyl-[ACP] + H2O. It carries out the reaction (3R)-hydroxydecanoyl-[ACP] = (2E)-decenoyl-[ACP] + H2O. It catalyses the reaction (2E)-decenoyl-[ACP] = (3Z)-decenoyl-[ACP]. Its pathway is lipid metabolism; fatty acid biosynthesis. Its function is as follows. Necessary for the introduction of cis unsaturation into fatty acids. Catalyzes the dehydration of (3R)-3-hydroxydecanoyl-ACP to E-(2)-decenoyl-ACP and then its isomerization to Z-(3)-decenoyl-ACP. Can catalyze the dehydratase reaction for beta-hydroxyacyl-ACPs with saturated chain lengths up to 16:0, being most active on intermediate chain length. This Pseudomonas fluorescens (strain Pf0-1) protein is 3-hydroxydecanoyl-[acyl-carrier-protein] dehydratase.